The following is a 262-amino-acid chain: tRNA pseudouridine synthase A (262 aa).

The Nucleophile role is filled by Asp55. Tyr116 is a binding site for substrate.

Belongs to the tRNA pseudouridine synthase TruA family. As to quaternary structure, homodimer.

It carries out the reaction uridine(38/39/40) in tRNA = pseudouridine(38/39/40) in tRNA. In terms of biological role, formation of pseudouridine at positions 38, 39 and 40 in the anticodon stem and loop of transfer RNAs. This is tRNA pseudouridine synthase A from Bdellovibrio bacteriovorus (strain ATCC 15356 / DSM 50701 / NCIMB 9529 / HD100).